The sequence spans 513 residues: 2-isopropylmalate synthase (513 aa).

Residues 4–268 form the Pyruvate carboxyltransferase domain; that stretch reads IKIFDTTLRD…ETGIRTELIY (265 aa). Mn(2+) contacts are provided by Asp13, His203, His205, and Asn239. The segment at 392 to 513 is regulatory domain; it reads RLVHFHVHTG…GLLRKNGGVE (122 aa).

Belongs to the alpha-IPM synthase/homocitrate synthase family. LeuA type 1 subfamily. Homodimer. The cofactor is Mn(2+).

Its subcellular location is the cytoplasm. The enzyme catalyses 3-methyl-2-oxobutanoate + acetyl-CoA + H2O = (2S)-2-isopropylmalate + CoA + H(+). It participates in amino-acid biosynthesis; L-leucine biosynthesis; L-leucine from 3-methyl-2-oxobutanoate: step 1/4. Functionally, catalyzes the condensation of the acetyl group of acetyl-CoA with 3-methyl-2-oxobutanoate (2-ketoisovalerate) to form 3-carboxy-3-hydroxy-4-methylpentanoate (2-isopropylmalate). This chain is 2-isopropylmalate synthase, found in Thermotoga neapolitana (strain ATCC 49049 / DSM 4359 / NBRC 107923 / NS-E).